Here is a 446-residue protein sequence, read N- to C-terminus: Probable D-serine dehydratase (446 aa).

An N6-(pyridoxal phosphate)lysine modification is found at K116.

It belongs to the serine/threonine dehydratase family. DsdA subfamily. Requires pyridoxal 5'-phosphate as cofactor.

The enzyme catalyses D-serine = pyruvate + NH4(+). This Bacillus cereus (strain 03BB102) protein is Probable D-serine dehydratase.